We begin with the raw amino-acid sequence, 247 residues long: MTVDISRATADELRSIAERGAVELDGASAQELLQWTEDTFGDGASAATGDRNGYIVASNMQDGVLVHLAAQVHPGVDVLFLDTGYHFPETIGTRDAVEQVYGVNVINARALASVAEQDVAEGKDLFARDPNRCCALRKVAPLKQTLSGYSAWVTGIRRVEAPTRANAPLISFDEAFGLVKINPIAPWSDEEMQNYIDTNSILVNPLVDEGYPSIGCAPCTSKPAPGSDPRSGRWAGASKTECGLHAS.

[4Fe-4S] cluster contacts are provided by Cys-133, Cys-134, Cys-216, and Cys-219. The disordered stretch occupies residues 222–247; the sequence is KPAPGSDPRSGRWAGASKTECGLHAS. Cys-242 functions as the Nucleophile; cysteine thiosulfonate intermediate in the catalytic mechanism.

This sequence belongs to the PAPS reductase family. CysH subfamily. It depends on [4Fe-4S] cluster as a cofactor.

The protein localises to the cytoplasm. The catalysed reaction is [thioredoxin]-disulfide + sulfite + AMP + 2 H(+) = adenosine 5'-phosphosulfate + [thioredoxin]-dithiol. It functions in the pathway sulfur metabolism; hydrogen sulfide biosynthesis; sulfite from sulfate. In terms of biological role, catalyzes the formation of sulfite from adenosine 5'-phosphosulfate (APS) using thioredoxin as an electron donor. The protein is Adenosine 5'-phosphosulfate reductase of Rhodococcus erythropolis (strain PR4 / NBRC 100887).